The following is a 162-amino-acid chain: Regulatory protein RecX (162 aa).

This sequence belongs to the RecX family.

The protein resides in the cytoplasm. Functionally, modulates RecA activity. This is Regulatory protein RecX from Xanthomonas axonopodis pv. citri (strain 306).